The chain runs to 157 residues: Protein Smg (157 aa).

Belongs to the Smg family.

The polypeptide is Protein Smg (Serratia proteamaculans (strain 568)).